The sequence spans 308 residues: Phenylcoumaran benzylic ether reductase PT1 (308 aa).

Residues 11 to 17 (GATGYIG), Arg-36, and Lys-46 contribute to the NADP(+) site. The active-site Proton acceptor is Lys-134. Arg-138 is an NADP(+) binding site.

It belongs to the NmrA-type oxidoreductase family. Isoflavone reductase subfamily.

The catalysed reaction is (-)-dehydrodiconiferyl alcohol + NADPH + H(+) = (S)-isodihydrodehydrodiconiferyl alcohol + NADP(+). It catalyses the reaction (+)-dehydrodiconiferyl alcohol + NADPH + H(+) = (R)-isodihydrodehydrodiconiferyl alcohol + NADP(+). It carries out the reaction (2R,3S)-dihydrodehydrodiconiferyl alcohol + NADPH + H(+) = (S)-tetrahydrodehydrodiconiferyl alcohol + NADP(+). The enzyme catalyses (2S,3R)-dihydrodehydrodiconiferyl alcohol + NADPH + H(+) = (R)-tetrahydrodehydrodiconiferyl alcohol + NADP(+). Oxidoreductase involved in lignan biosynthesis. Catalyzes the NADPH-dependent reduction of phenylcoumaran benzylic ethers. Converts dehydrodiconiferyl alcohol (DDC) to isodihydrodehydrodiconiferyl alcohol (IDDDC), and dihydrodehydrodiconiferyl alcohol (DDDC) to tetrahydrodehydrodiconiferyl alcohol (TDDC). The polypeptide is Phenylcoumaran benzylic ether reductase PT1 (Pinus taeda (Loblolly pine)).